The chain runs to 130 residues: Fluoride-specific ion channel FluC (130 aa).

The next 4 membrane-spanning stretches (helical) occupy residues 3-23, 38-58, 67-87, and 102-122; these read FVFL…YFVG, LGTF…GHLA, FGIF…SYGL, and VSYV…GWFL. Positions 77 and 80 each coordinate Na(+).

The protein belongs to the fluoride channel Fluc/FEX (TC 1.A.43) family.

It is found in the cell inner membrane. The enzyme catalyses fluoride(in) = fluoride(out). Its activity is regulated as follows. Na(+) is not transported, but it plays an essential structural role and its presence is essential for fluoride channel function. In terms of biological role, fluoride-specific ion channel. Important for reducing fluoride concentration in the cell, thus reducing its toxicity. The polypeptide is Fluoride-specific ion channel FluC (Helicobacter pylori (strain HPAG1)).